The sequence spans 478 residues: Probable cyclin-dependent kinase 9 (478 aa).

The segment covering 1–17 (MSAQNYHAGLHQSSTQR) has biased composition (polar residues). A disordered region spans residues 1–55 (MSAQNYHAGLHQSSTQRPPKRPNTEHAQEPPKRALIGGQTTPSSSGGGQTPNGTN). The segment covering 22–32 (PNTEHAQEPPK) has biased composition (basic and acidic residues). The Protein kinase domain occupies 85 to 413 (YEKLNKIGQG…SDEAEDDIWF (329 aa)). ATP is bound by residues 91–99 (IGQGTFGEV) and K114. Residue D217 is the Proton acceptor of the active site. A disordered region spans residues 444 to 478 (HANRGRHQNAQQRPNQQQARPSNAIPAGQYRDTIF). The span at 451 to 464 (QNAQQRPNQQQARP) shows a compositional bias: low complexity.

Belongs to the protein kinase superfamily. CMGC Ser/Thr protein kinase family. CDC2/CDKX subfamily. In terms of assembly, associates with cyclin-T (cit-1.1 or cit-1.2) to form P-TEFb.

It localises to the nucleus. It carries out the reaction L-seryl-[protein] + ATP = O-phospho-L-seryl-[protein] + ADP + H(+). It catalyses the reaction L-threonyl-[protein] + ATP = O-phospho-L-threonyl-[protein] + ADP + H(+). The enzyme catalyses [DNA-directed RNA polymerase] + ATP = phospho-[DNA-directed RNA polymerase] + ADP + H(+). Its function is as follows. Essential member of the cyclin-dependent kinase pair (CDK9/cyclin-T) complex, also called positive transcription elongation factor B (P-TEFb), which is proposed to facilitate the transition from abortive to production elongation by phosphorylating the CTD (C-terminal domain) of the large subunit of RNA polymerase II (RNAP II) and spt-5. The chain is Probable cyclin-dependent kinase 9 (cdk-9) from Caenorhabditis elegans.